A 247-amino-acid chain; its full sequence is Triosephosphate isomerase (247 aa).

Substrate is bound by residues N10 and K12. Catalysis depends on H94, which acts as the Electrophile. E164 serves as the catalytic Proton acceptor.

Belongs to the triosephosphate isomerase family. Homodimer.

It carries out the reaction D-glyceraldehyde 3-phosphate = dihydroxyacetone phosphate. It participates in carbohydrate biosynthesis; gluconeogenesis. It functions in the pathway carbohydrate degradation; glycolysis; D-glyceraldehyde 3-phosphate from glycerone phosphate: step 1/1. The chain is Triosephosphate isomerase (Tpi) from Drosophila simulans (Fruit fly).